The following is a 189-amino-acid chain: MTVGILALQGDFREHEEMLRRIGAPTLQVRLPKHLQHVERLIIPGGESTTIGKLLAMYGLIDPLRARIRDGMPVWGTCAGAILLAQRIADGRADQPSLRLMDVTARRNAFGSQLESFEVDLPVLGLGDEPLRMVFIRAPVLEDLGRDVTPLAHLDDGRVVAARQGTMLATCFHPELTPDERMHRYFLAM.

46 to 48 serves as a coordination point for L-glutamine; the sequence is GES. The active-site Nucleophile is the cysteine 78. L-glutamine-binding positions include arginine 107 and 136 to 137; that span reads IR. Residues histidine 173 and glutamate 175 each act as charge relay system in the active site.

The protein belongs to the glutaminase PdxT/SNO family. In the presence of PdxS, forms a dodecamer of heterodimers. Only shows activity in the heterodimer.

The catalysed reaction is aldehydo-D-ribose 5-phosphate + D-glyceraldehyde 3-phosphate + L-glutamine = pyridoxal 5'-phosphate + L-glutamate + phosphate + 3 H2O + H(+). The enzyme catalyses L-glutamine + H2O = L-glutamate + NH4(+). It participates in cofactor biosynthesis; pyridoxal 5'-phosphate biosynthesis. Functionally, catalyzes the hydrolysis of glutamine to glutamate and ammonia as part of the biosynthesis of pyridoxal 5'-phosphate. The resulting ammonia molecule is channeled to the active site of PdxS. This Roseiflexus sp. (strain RS-1) protein is Pyridoxal 5'-phosphate synthase subunit PdxT.